A 327-amino-acid chain; its full sequence is GTPase Obg (327 aa).

Residues 1–159 form the Obg domain; that stretch reads MQFIDQANII…WEVQLELKLL (159 aa). An OBG-type G domain is found at 160 to 327; that stretch reads AEVGIIGLPN…SLLSEVWKRI (168 aa). ATP is bound by residues 166–173, 191–195, 213–216, 280–283, and 309–311; these read GLPNAGKS, FTTLI, DIPG, NKME, and SSS. Mg(2+) is bound by residues serine 173 and threonine 193.

Belongs to the TRAFAC class OBG-HflX-like GTPase superfamily. OBG GTPase family. Monomer. Mg(2+) serves as cofactor.

It is found in the cytoplasm. Functionally, an essential GTPase which binds GTP, GDP and possibly (p)ppGpp with moderate affinity, with high nucleotide exchange rates and a fairly low GTP hydrolysis rate. Plays a role in control of the cell cycle, stress response, ribosome biogenesis and in those bacteria that undergo differentiation, in morphogenesis control. The protein is GTPase Obg of Prochlorococcus marinus (strain MIT 9301).